The sequence spans 727 residues: Glycerol-3-phosphate dehydrogenase, mitochondrial (727 aa).

The transit peptide at 1–42 (MAFQKAVKGTILVGGGALATVLGLSQFAHYRRKQMNLAYVKA) directs the protein to the mitochondrion. 71-99 (DILVIGGGATGSGCALDAVTRGLKTALVE) contributes to the FAD binding site. Y601 carries the post-translational modification Phosphotyrosine. EF-hand domains follow at residues 623–658 (SDIDRYKKRFHKFDADQKGFITIVDVQRVLESINVQ) and 659–694 (MDENTLHEILNEVDLNKNGQVELNEFLQLMSAIQKG). Residues D672, N674, N676, Q678, and E683 each contribute to the Ca(2+) site.

This sequence belongs to the FAD-dependent glycerol-3-phosphate dehydrogenase family. The cofactor is FAD.

Its subcellular location is the mitochondrion. It carries out the reaction a quinone + sn-glycerol 3-phosphate = dihydroxyacetone phosphate + a quinol. Its pathway is polyol metabolism; glycerol degradation via glycerol kinase pathway; glycerone phosphate from sn-glycerol 3-phosphate (anaerobic route): step 1/1. Calcium-binding enhance the activity of the enzyme. Calcium-responsive mitochondrial glycerol-3-phosphate dehydrogenase which seems to be a key component of the pancreatic beta-cell glucose-sensing device. This Homo sapiens (Human) protein is Glycerol-3-phosphate dehydrogenase, mitochondrial.